The primary structure comprises 585 residues: Formate--tetrahydrofolate ligase (585 aa).

Residue 65 to 72 (TPHGEGKT) coordinates ATP.

This sequence belongs to the formate--tetrahydrofolate ligase family.

The catalysed reaction is (6S)-5,6,7,8-tetrahydrofolate + formate + ATP = (6R)-10-formyltetrahydrofolate + ADP + phosphate. It participates in one-carbon metabolism; tetrahydrofolate interconversion. The polypeptide is Formate--tetrahydrofolate ligase (Shewanella baltica (strain OS195)).